We begin with the raw amino-acid sequence, 470 residues long: Serine hydroxymethyltransferase 5 (470 aa).

Residue Lys-244 is modified to N6-(pyridoxal phosphate)lysine.

This sequence belongs to the SHMT family. In terms of assembly, homotetramer. It depends on pyridoxal 5'-phosphate as a cofactor.

The protein localises to the cytoplasm. It carries out the reaction (6R)-5,10-methylene-5,6,7,8-tetrahydrofolate + glycine + H2O = (6S)-5,6,7,8-tetrahydrofolate + L-serine. It participates in one-carbon metabolism; tetrahydrofolate interconversion. Catalyzes the interconversion of serine and glycine. The sequence is that of Serine hydroxymethyltransferase 5 (SHM5) from Arabidopsis thaliana (Mouse-ear cress).